The chain runs to 254 residues: Large ribosomal subunit protein uL2 (254 aa).

The protein belongs to the universal ribosomal protein uL2 family.

This chain is Large ribosomal subunit protein uL2 (RPL2), found in Candida glabrata (strain ATCC 2001 / BCRC 20586 / JCM 3761 / NBRC 0622 / NRRL Y-65 / CBS 138) (Yeast).